A 161-amino-acid chain; its full sequence is Peroxynitrite isomerase 2 (161 aa).

Residues 17-23 (GTWTGRG) carry the GXWXGXG motif. Histidine 152 is a binding site for heme b.

Belongs to the nitrobindin family. In terms of assembly, homodimer. The cofactor is heme b.

It catalyses the reaction peroxynitrite = nitrate. It participates in nitrogen metabolism. In terms of biological role, heme-binding protein able to scavenge peroxynitrite and to protect free L-tyrosine against peroxynitrite-mediated nitration, by acting as a peroxynitrite isomerase that converts peroxynitrite to nitrate. Therefore, this protein likely plays a role in peroxynitrite sensing and in the detoxification of reactive nitrogen and oxygen species (RNS and ROS, respectively). Is able to bind nitric oxide (NO) in vitro, but may act as a sensor of peroxynitrite levels in vivo. The protein is Peroxynitrite isomerase 2 of Mycobacterium avium (strain 104).